A 389-amino-acid chain; its full sequence is Chorismate synthase (389 aa).

Residues arginine 41 and arginine 47 each contribute to the NADP(+) site. Residues 129–131 (RSS), 247–248 (NA), glycine 291, 306–310 (KPIST), and arginine 332 each bind FMN.

It belongs to the chorismate synthase family. As to quaternary structure, homotetramer. The cofactor is FMNH2.

It catalyses the reaction 5-O-(1-carboxyvinyl)-3-phosphoshikimate = chorismate + phosphate. The protein operates within metabolic intermediate biosynthesis; chorismate biosynthesis; chorismate from D-erythrose 4-phosphate and phosphoenolpyruvate: step 7/7. In terms of biological role, catalyzes the anti-1,4-elimination of the C-3 phosphate and the C-6 proR hydrogen from 5-enolpyruvylshikimate-3-phosphate (EPSP) to yield chorismate, which is the branch point compound that serves as the starting substrate for the three terminal pathways of aromatic amino acid biosynthesis. This reaction introduces a second double bond into the aromatic ring system. The protein is Chorismate synthase of Rubrobacter xylanophilus (strain DSM 9941 / JCM 11954 / NBRC 16129 / PRD-1).